Reading from the N-terminus, the 172-residue chain is Large ribosomal subunit protein uL10 (172 aa).

The protein belongs to the universal ribosomal protein uL10 family. Part of the ribosomal stalk of the 50S ribosomal subunit. The N-terminus interacts with L11 and the large rRNA to form the base of the stalk. The C-terminus forms an elongated spine to which L12 dimers bind in a sequential fashion forming a multimeric L10(L12)X complex.

Forms part of the ribosomal stalk, playing a central role in the interaction of the ribosome with GTP-bound translation factors. In Chelativorans sp. (strain BNC1), this protein is Large ribosomal subunit protein uL10.